Reading from the N-terminus, the 523-residue chain is Sucrose 6(F)-phosphate phosphorylase (523 aa).

Residues aspartate 58, histidine 96, 221–223, glutamate 264, 326–327, and lysine 434 contribute to the sucrose 6(F)-phosphate site; these read RLD and HD. Residue aspartate 223 is the Nucleophile of the active site. The active-site Proton donor/acceptor is glutamate 264.

Belongs to the glycosyl hydrolase 13 family. Sucrose phosphorylase subfamily. Monomer.

The catalysed reaction is sucrose 6(F)-phosphate + phosphate = beta-D-fructose 6-phosphate + alpha-D-glucose 1-phosphate. Its function is as follows. Catalyzes the reversible phosphorolysis of sucrose 6(F)-phosphate into alpha-D-glucose 1-phosphate (Glc1P) and D-fructose 6-phosphate. May be involved in a new pathway for the degradation of sucrose, which could become phosphorylated on its fructose moiety during uptake via a PTS system. Shows strict specificity since it does not catalyze reactions with alternative substrates. The protein is Sucrose 6(F)-phosphate phosphorylase of Ilumatobacter coccineus (strain NBRC 103263 / KCTC 29153 / YM16-304).